We begin with the raw amino-acid sequence, 256 residues long: Neuroendocrine secretory protein 55 (256 aa).

The signal sequence occupies residues 1 to 46 (MDRRSRAHQWRRARHNYNDLCPPIGRRAATALLWLSCSIALLRALA). The interval 61–256 (SFLNAHHRSA…RKGPIPIRRH (196 aa)) is disordered. A compositionally biased stretch (basic and acidic residues) spans 86–103 (ESDHEHEEAEPELARPEC). Acidic residues-rich tracts occupy residues 104–139 (LEYDQDDYETETDSETEPESDIQSETEFETEPETEP) and 206–216 (LDEDPRDPEES). Residues 225 to 236 (QPRRCKTRRPAR) show a composition bias toward basic residues.

Belongs to the NESP55 family. Post-translationally, binds keratan sulfate chains. May be proteolytically processed to give rise to a number of active peptides.

It is found in the cytoplasmic vesicle. It localises to the secretory vesicle. Its subcellular location is the synaptic vesicle. The protein localises to the secreted. This Rattus norvegicus (Rat) protein is Neuroendocrine secretory protein 55.